We begin with the raw amino-acid sequence, 42 residues long: Photosystem I reaction center subunit IX (42 aa).

The helical transmembrane segment at 7–27 (FLSTAPVLIMALLTVTAGILI) threads the bilayer.

It belongs to the PsaJ family.

Its subcellular location is the cellular thylakoid membrane. In terms of biological role, may help in the organization of the PsaE and PsaF subunits. The sequence is that of Photosystem I reaction center subunit IX from Crocosphaera subtropica (strain ATCC 51142 / BH68) (Cyanothece sp. (strain ATCC 51142)).